The primary structure comprises 506 residues: Nostrin (506 aa).

Residues 1-260 (MRDPLTDCSY…AISKVDVEKD (260 aa)) enclose the F-BAR domain. A Phosphoserine modification is found at Ser-114. Coiled coils occupy residues 160–230 (SLTQ…LNQY) and 305–334 (KLGR…ASSS). In terms of domain architecture, REM-1 spans 292-372 (PMDKERRKSL…SYKLSSVLAD (81 aa)). The segment at 413 to 435 (KAESKAPAGGQNNPSSSPSGSTV) is disordered. The segment covering 419–435 (PAGGQNNPSSSPSGSTV) has biased composition (low complexity). The 60-residue stretch at 438–497 (ASKHLCKALYTFQARQDDELNLEKGDIVTVHEKKEEGWWFGSLKGKRGHFPAAYVEELPP) folds into the SH3 domain. Phosphoserine is present on Ser-479.

Homotrimer. Interacts with NOS3, DNM2, WASL and CAV1. Interacts with DAB2. Interacts (via SH3 domain) with DNM2; this interaction allows the recruitment of NOS3 to dynamin-positive structures.

Its subcellular location is the cell membrane. The protein localises to the cytoplasmic vesicle. It localises to the cytoplasm. The protein resides in the cytoskeleton. It is found in the nucleus. Multivalent adapter protein which may decrease NOS3 activity by inducing its translocation away from the plasma membrane. The sequence is that of Nostrin from Mus musculus (Mouse).